Consider the following 361-residue polypeptide: Chorismate synthase (361 aa).

The segment at Thr-37–Arg-59 is disordered. Residues Asp-40–Arg-49 are compositionally biased toward basic and acidic residues. 2 residues coordinate NADP(+): Arg-48 and Arg-54. FMN contacts are provided by residues Arg-125 to Ser-127, Asn-238 to Ala-239, Gly-278, Lys-293 to Ser-297, and Arg-319.

The protein belongs to the chorismate synthase family. In terms of assembly, homotetramer. It depends on FMNH2 as a cofactor.

It catalyses the reaction 5-O-(1-carboxyvinyl)-3-phosphoshikimate = chorismate + phosphate. It participates in metabolic intermediate biosynthesis; chorismate biosynthesis; chorismate from D-erythrose 4-phosphate and phosphoenolpyruvate: step 7/7. Catalyzes the anti-1,4-elimination of the C-3 phosphate and the C-6 proR hydrogen from 5-enolpyruvylshikimate-3-phosphate (EPSP) to yield chorismate, which is the branch point compound that serves as the starting substrate for the three terminal pathways of aromatic amino acid biosynthesis. This reaction introduces a second double bond into the aromatic ring system. This chain is Chorismate synthase, found in Serratia proteamaculans (strain 568).